The following is a 590-amino-acid chain: Aspartate--tRNA(Asp/Asn) ligase (590 aa).

Glu182 lines the L-aspartate pocket. Residues 206–209 are aspartate; the sequence is QLFK. An L-aspartate-binding site is contributed by Arg228. Residues 228-230 and Gln237 each bind ATP; that span reads RDE. His454 contacts L-aspartate. Glu488 provides a ligand contact to ATP. L-aspartate is bound at residue Arg495. 540–543 contacts ATP; that stretch reads GLDR.

This sequence belongs to the class-II aminoacyl-tRNA synthetase family. Type 1 subfamily. As to quaternary structure, homodimer.

The protein localises to the cytoplasm. It carries out the reaction tRNA(Asx) + L-aspartate + ATP = L-aspartyl-tRNA(Asx) + AMP + diphosphate. Functionally, aspartyl-tRNA synthetase with relaxed tRNA specificity since it is able to aspartylate not only its cognate tRNA(Asp) but also tRNA(Asn). Reaction proceeds in two steps: L-aspartate is first activated by ATP to form Asp-AMP and then transferred to the acceptor end of tRNA(Asp/Asn). In Halothermothrix orenii (strain H 168 / OCM 544 / DSM 9562), this protein is Aspartate--tRNA(Asp/Asn) ligase.